Reading from the N-terminus, the 881-residue chain is DNA mismatch repair protein MutS (881 aa).

Gly-627–Ser-634 contributes to the ATP binding site.

This sequence belongs to the DNA mismatch repair MutS family.

Its function is as follows. This protein is involved in the repair of mismatches in DNA. It is possible that it carries out the mismatch recognition step. This protein has a weak ATPase activity. The protein is DNA mismatch repair protein MutS of Acinetobacter baumannii (strain AB307-0294).